The primary structure comprises 382 residues: Histidinol-phosphate aminotransferase (382 aa).

K215 is modified (N6-(pyridoxal phosphate)lysine). Positions 363-382 (NIDNQNKTYSQTSSIRKGTI) are disordered.

This sequence belongs to the class-II pyridoxal-phosphate-dependent aminotransferase family. Histidinol-phosphate aminotransferase subfamily. As to quaternary structure, homodimer. Pyridoxal 5'-phosphate serves as cofactor.

The catalysed reaction is L-histidinol phosphate + 2-oxoglutarate = 3-(imidazol-4-yl)-2-oxopropyl phosphate + L-glutamate. Its pathway is amino-acid biosynthesis; L-histidine biosynthesis; L-histidine from 5-phospho-alpha-D-ribose 1-diphosphate: step 7/9. The chain is Histidinol-phosphate aminotransferase from Yersinia pestis bv. Antiqua (strain Antiqua).